Consider the following 261-residue polypeptide: Ribosomal RNA small subunit methyltransferase J (261 aa).

S-adenosyl-L-methionine-binding positions include 111 to 112 (RD), 127 to 128 (ER), 163 to 164 (SS), and Asp181.

Belongs to the methyltransferase superfamily. RsmJ family.

Its subcellular location is the cytoplasm. It carries out the reaction guanosine(1516) in 16S rRNA + S-adenosyl-L-methionine = N(2)-methylguanosine(1516) in 16S rRNA + S-adenosyl-L-homocysteine + H(+). Functionally, specifically methylates the guanosine in position 1516 of 16S rRNA. In Shewanella sp. (strain ANA-3), this protein is Ribosomal RNA small subunit methyltransferase J.